Reading from the N-terminus, the 723-residue chain is MGLCLRWRRLGFPLPEFRRCELHTVREASAPTPPHWLAERFGLFEELWTAHVKKLASMTQKKARAIKISLPEGQKVDAVAWNTTPYQLAHQISVTLADTAVAAEVNGELYDLDRPLETDCHLRFLTFDSPEGKAVFWHSSAHVLGAAAEQQLGAVLCRGPSTESGFYHDFFLGKERTVRSAELPILERICQELIAAAQPFRRLEASRDQLRQLFKDNHFKLHLIEEKVTGPTATVYGCGMSVDLCRGPHLRHTGQIGALKLLTNSSALWRSLGAPETLQRVSGISFPKVELLRNWEARREAAELRDHRRIGKEQELFFFHELSPGSCFFLPRGTRVYNALVAFIRAEYARRGFSEVKTPTLFSTKLWEQSGHWEHYRADMFSLKPPGTDGVDNSQSGHPARCPKDTLALKPMNCPAHCLMFAHRPRSWRELPVRLADFGALHRAEASGSLGGLTRLWRFQQDDAHIFCAPHQLEAEIQGCLDFLRCVYSVLGFSFHLALSTRPPGFLGEPRLWDQAEQVLQQALEKFGEPWDLNPGDGAFYGPKIDVHLHDALGRPHQCGTIQLDFQLPLRFDLQYKGPAGTPECPVLIHRAVLGSVERLLGVLAESCGGKWPLWLSPLQVVVIPVRTEQEEYARQVQQCLQAAGLVSDLDADSGLTLSRRVRRAQLAHYNFQFVVGQREQSQRTVNVRTRDNRQLGERDLAESVQRLLELQNARVPNAEEVF.

Ser-57 carries the post-translational modification Phosphoserine. One can recognise a TGS domain in the interval Arg-64–Thr-126.

The protein belongs to the class-II aminoacyl-tRNA synthetase family. As to quaternary structure, homodimer.

It is found in the mitochondrion matrix. The enzyme catalyses tRNA(Thr) + L-threonine + ATP = L-threonyl-tRNA(Thr) + AMP + diphosphate + H(+). Its function is as follows. Catalyzes the attachment of threonine to tRNA(Thr) in a two-step reaction: threonine is first activated by ATP to form Thr-AMP and then transferred to the acceptor end of tRNA(Thr). Also edits incorrectly charged tRNA(Thr) via its editing domain. The chain is Threonine--tRNA ligase, mitochondrial (Tars2) from Mus musculus (Mouse).